Reading from the N-terminus, the 254-residue chain is Type III pantothenate kinase (254 aa).

Aspartate 7 to lysine 14 lines the ATP pocket. Residues tyrosine 96 and glycine 103 to arginine 106 each bind substrate. Aspartate 105 (proton acceptor) is an active-site residue. Threonine 133 provides a ligand contact to ATP. A substrate-binding site is contributed by threonine 183.

The protein belongs to the type III pantothenate kinase family. In terms of assembly, homodimer. NH4(+) serves as cofactor. Requires K(+) as cofactor.

Its subcellular location is the cytoplasm. It catalyses the reaction (R)-pantothenate + ATP = (R)-4'-phosphopantothenate + ADP + H(+). It functions in the pathway cofactor biosynthesis; coenzyme A biosynthesis; CoA from (R)-pantothenate: step 1/5. In terms of biological role, catalyzes the phosphorylation of pantothenate (Pan), the first step in CoA biosynthesis. The protein is Type III pantothenate kinase of Paracidovorax citrulli (strain AAC00-1) (Acidovorax citrulli).